Reading from the N-terminus, the 271-residue chain is RELT-like protein 1 (271 aa).

The N-terminal stretch at 1–23 (MAPRALPGSAVLAAAVFVGGAVS) is a signal peptide. At 24–57 (SPLVAPDNGSSRTLHSRTETTPSPSNDTGNGHPE) the chain is on the extracellular side. Positions 28-53 (APDNGSSRTLHSRTETTPSPSNDTGN) are disordered. Residues Asn31 and Asn49 are each glycosylated (N-linked (GlcNAc...) asparagine). Positions 31 to 52 (NGSSRTLHSRTETTPSPSNDTG) are enriched in polar residues. Residues 58–78 (YIAYALVPVFFIMGLFGVLIC) form a helical membrane-spanning segment. Residues 79–271 (HLLKKKGYRC…PVKRERSGTE (193 aa)) lie on the Cytoplasmic side of the membrane. Residues 89–113 (TTEAEQDIEEEKVEKIELNDSVNEN) are a coiled coil. 2 positions are modified to phosphoserine: Ser109 and Ser114. Disordered stretches follow at residues 145–173 (DPES…TPGK) and 233–271 (VEHK…SGTE). A compositionally biased stretch (pro residues) spans 155–165 (PGSPPVSPGPL). Over residues 233-244 (VEHKSNQKERRS) the composition is skewed to basic and acidic residues. 2 positions are modified to phosphoserine: Ser244 and Ser247.

It belongs to the RELT family. Interacts with RELT, RELL2 and OXSR1. Interacts with PLSCR1. Post-translationally, phosphorylated in vitro by OXSR1. In terms of tissue distribution, widely expressed. Expressed at highest levels in the placenta, skeletal muscle, spleen and testis.

The protein localises to the cell membrane. Functionally, induces activation of MAPK14/p38 cascade, when overexpressed. Induces apoptosis, when overexpressed. This chain is RELT-like protein 1 (RELL1), found in Homo sapiens (Human).